We begin with the raw amino-acid sequence, 151 residues long: Protein SprT-like (151 aa).

A SprT-like domain is found at 6-147 (LQRMVENLSE…GHCNGKLRMK (142 aa)). A Zn(2+)-binding site is contributed by His-67. Glu-68 is a catalytic residue. His-71 contributes to the Zn(2+) binding site.

The protein belongs to the SprT family. Zn(2+) is required as a cofactor.

The protein resides in the cytoplasm. The protein is Protein SprT-like of Staphylococcus aureus (strain MRSA252).